The primary structure comprises 338 residues: Lipoate-protein ligase A (338 aa).

Residues 29–216 form the BPL/LPL catalytic domain; the sequence is PATQRVLFLW…AFFAHYGERV (188 aa). ATP contacts are provided by residues R71, 76–79, and K134; that span reads GAVF. K134 is a (R)-lipoate binding site.

Belongs to the LplA family. In terms of assembly, monomer.

Its subcellular location is the cytoplasm. It carries out the reaction L-lysyl-[lipoyl-carrier protein] + (R)-lipoate + ATP = N(6)-[(R)-lipoyl]-L-lysyl-[lipoyl-carrier protein] + AMP + diphosphate + H(+). It functions in the pathway protein modification; protein lipoylation via exogenous pathway; protein N(6)-(lipoyl)lysine from lipoate: step 1/2. The protein operates within protein modification; protein lipoylation via exogenous pathway; protein N(6)-(lipoyl)lysine from lipoate: step 2/2. In terms of biological role, catalyzes both the ATP-dependent activation of exogenously supplied lipoate to lipoyl-AMP and the transfer of the activated lipoyl onto the lipoyl domains of lipoate-dependent enzymes. In Escherichia coli (strain 55989 / EAEC), this protein is Lipoate-protein ligase A.